Reading from the N-terminus, the 102-residue chain is MYAIIKTGGKQVKVEVGQAIYVEKLNVEAGEKVVFDEVILVGGESTKVGAPTVAGATVEGTVEKHGKQKKVVTFQYKPKKHSHRKQGHRQPYTKVMIEAINA.

This sequence belongs to the bacterial ribosomal protein bL21 family. In terms of assembly, part of the 50S ribosomal subunit. Contacts protein L20.

This protein binds to 23S rRNA in the presence of protein L20. The sequence is that of Large ribosomal subunit protein bL21 from Enterococcus faecalis (strain ATCC 700802 / V583).